Reading from the N-terminus, the 138-residue chain is Translation initiation factor 5A (138 aa).

The residue at position 42 (lysine 42) is a Hypusine.

It belongs to the eIF-5A family.

The protein localises to the cytoplasm. Functions by promoting the formation of the first peptide bond. In Pyrobaculum aerophilum (strain ATCC 51768 / DSM 7523 / JCM 9630 / CIP 104966 / NBRC 100827 / IM2), this protein is Translation initiation factor 5A (eif5a).